Consider the following 441-residue polypeptide: Tubulin beta-1 chain (441 aa).

Residues Gln11, Glu69, Ser138, Gly142, Thr143, Gly144, Asn204, and Asn226 each coordinate GTP. Glu69 contacts Mg(2+).

This sequence belongs to the tubulin family. In terms of assembly, dimer of alpha and beta chains. A typical microtubule is a hollow water-filled tube with an outer diameter of 25 nm and an inner diameter of 15 nM. Alpha-beta heterodimers associate head-to-tail to form protofilaments running lengthwise along the microtubule wall with the beta-tubulin subunit facing the microtubule plus end conferring a structural polarity. Microtubules usually have 13 protofilaments but different protofilament numbers can be found in some organisms and specialized cells. Mg(2+) serves as cofactor. As to expression, expressed primarily in touch receptor neurons.

It localises to the cytoplasm. The protein resides in the cytoskeleton. In terms of biological role, TTubulin is the major constituent of microtubules, a cylinder consisting of laterally associated linear protofilaments composed of alpha- and beta-tubulin heterodimers. Microtubules grow by the addition of GTP-tubulin dimers to the microtubule end, where a stabilizing cap forms. Below the cap, tubulin dimers are in GDP-bound state, owing to GTPase activity of alpha-tubulin. Plays a role in mechanosensory transduction (touch sensitivity). Functionally, mec-7 beta-tubulin is required for the production of 15-protofilament microtubules. This Caenorhabditis elegans protein is Tubulin beta-1 chain (mec-7).